Here is a 352-residue protein sequence, read N- to C-terminus: Small ribosomal subunit biogenesis GTPase RsgA (352 aa).

Residues 109 to 277 enclose the CP-type G domain; the sequence is DTVLKRPDMY…LIDSPGIREF (169 aa). GTP contacts are provided by residues 165-168 and 219-227; these read NKAD and GQSGVGKSS. 4 residues coordinate Zn(2+): C301, C306, H308, and C314.

This sequence belongs to the TRAFAC class YlqF/YawG GTPase family. RsgA subfamily. Monomer. Associates with 30S ribosomal subunit, binds 16S rRNA. The cofactor is Zn(2+).

The protein resides in the cytoplasm. In terms of biological role, one of several proteins that assist in the late maturation steps of the functional core of the 30S ribosomal subunit. Helps release RbfA from mature subunits. May play a role in the assembly of ribosomal proteins into the subunit. Circularly permuted GTPase that catalyzes slow GTP hydrolysis, GTPase activity is stimulated by the 30S ribosomal subunit. This is Small ribosomal subunit biogenesis GTPase RsgA from Alcanivorax borkumensis (strain ATCC 700651 / DSM 11573 / NCIMB 13689 / SK2).